A 363-amino-acid chain; its full sequence is Probable dual-specificity RNA methyltransferase RlmN (363 aa).

The active-site Proton acceptor is the glutamate 99. Residues 105–341 (SENRMTACVS…VTVRKSHGAS (237 aa)) enclose the Radical SAM core domain. Cysteine 112 and cysteine 346 form a disulfide bridge. [4Fe-4S] cluster contacts are provided by cysteine 119, cysteine 123, and cysteine 126. Residues 171–172 (GE), serine 204, 227–229 (SLH), and asparagine 303 each bind S-adenosyl-L-methionine. The active-site S-methylcysteine intermediate is cysteine 346.

It belongs to the radical SAM superfamily. RlmN family. It depends on [4Fe-4S] cluster as a cofactor.

The protein localises to the cytoplasm. The catalysed reaction is adenosine(2503) in 23S rRNA + 2 reduced [2Fe-2S]-[ferredoxin] + 2 S-adenosyl-L-methionine = 2-methyladenosine(2503) in 23S rRNA + 5'-deoxyadenosine + L-methionine + 2 oxidized [2Fe-2S]-[ferredoxin] + S-adenosyl-L-homocysteine. It carries out the reaction adenosine(37) in tRNA + 2 reduced [2Fe-2S]-[ferredoxin] + 2 S-adenosyl-L-methionine = 2-methyladenosine(37) in tRNA + 5'-deoxyadenosine + L-methionine + 2 oxidized [2Fe-2S]-[ferredoxin] + S-adenosyl-L-homocysteine. Functionally, specifically methylates position 2 of adenine 2503 in 23S rRNA and position 2 of adenine 37 in tRNAs. This chain is Probable dual-specificity RNA methyltransferase RlmN, found in Chlorobium phaeobacteroides (strain DSM 266 / SMG 266 / 2430).